A 525-amino-acid chain; its full sequence is Peptide chain release factor 3 (525 aa).

The region spanning 11–279 (NKRRTFAIIS…TYLQFAPAPS (269 aa)) is the tr-type G domain. GTP-binding positions include 20–27 (SHPDAGKT), 88–92 (DTPGH), and 142–145 (NKFD).

The protein belongs to the TRAFAC class translation factor GTPase superfamily. Classic translation factor GTPase family. PrfC subfamily.

The protein resides in the cytoplasm. Functionally, increases the formation of ribosomal termination complexes and stimulates activities of RF-1 and RF-2. It binds guanine nucleotides and has strong preference for UGA stop codons. It may interact directly with the ribosome. The stimulation of RF-1 and RF-2 is significantly reduced by GTP and GDP, but not by GMP. The protein is Peptide chain release factor 3 of Limosilactobacillus reuteri (strain DSM 20016) (Lactobacillus reuteri).